Reading from the N-terminus, the 347-residue chain is tRNA N6-adenosine threonylcarbamoyltransferase (347 aa).

Residues histidine 109 and histidine 113 each coordinate Fe cation. Residues 136–140 (TVSGG), aspartate 169, glycine 182, aspartate 186, and asparagine 284 contribute to the substrate site. A Fe cation-binding site is contributed by aspartate 312.

This sequence belongs to the KAE1 / TsaD family. Requires Fe(2+) as cofactor.

It localises to the cytoplasm. The enzyme catalyses L-threonylcarbamoyladenylate + adenosine(37) in tRNA = N(6)-L-threonylcarbamoyladenosine(37) in tRNA + AMP + H(+). Required for the formation of a threonylcarbamoyl group on adenosine at position 37 (t(6)A37) in tRNAs that read codons beginning with adenine. Is involved in the transfer of the threonylcarbamoyl moiety of threonylcarbamoyl-AMP (TC-AMP) to the N6 group of A37, together with TsaE and TsaB. TsaD likely plays a direct catalytic role in this reaction. This is tRNA N6-adenosine threonylcarbamoyltransferase from Chlorobium phaeobacteroides (strain BS1).